The chain runs to 710 residues: Polyribonucleotide nucleotidyltransferase (710 aa).

Positions 489 and 495 each coordinate Mg(2+). The KH domain maps to 556–615 (PKIDTIKIDVDKIKVVIGKGGETIDKIIAETGVKIDIDDEGNVSIYSSDQAAIDRTKEII). One can recognise an S1 motif domain in the interval 625–693 (GEVYHAKVIR…EKGRVDASMK (69 aa)).

It belongs to the polyribonucleotide nucleotidyltransferase family. Mg(2+) is required as a cofactor.

It localises to the cytoplasm. The catalysed reaction is RNA(n+1) + phosphate = RNA(n) + a ribonucleoside 5'-diphosphate. Its function is as follows. Involved in mRNA degradation. Catalyzes the phosphorolysis of single-stranded polyribonucleotides processively in the 3'- to 5'-direction. This chain is Polyribonucleotide nucleotidyltransferase, found in Streptococcus pyogenes serotype M3 (strain ATCC BAA-595 / MGAS315).